The following is a 94-amino-acid chain: Integration host factor subunit beta (94 aa).

It belongs to the bacterial histone-like protein family. Heterodimer of an alpha and a beta chain.

This protein is one of the two subunits of integration host factor, a specific DNA-binding protein that functions in genetic recombination as well as in transcriptional and translational control. This chain is Integration host factor subunit beta, found in Citrobacter koseri (strain ATCC BAA-895 / CDC 4225-83 / SGSC4696).